The chain runs to 622 residues: MDAHQKQSLPAVTLAAIGVVYGDIGTSPLYTFKECFSPHIGLPPTQQVVYGFLSLIFWALILVVSVKYLAFVLRADNRGEGGILTLMSLAGRNTYAGTTTVLLVLGLIGGGFFYGEVVITPAMSVLSALEGLSVATPALTPYILPVAIAVLTALFVIQKHGTGSVGKLFGPVMLLWFFSLGTLGAISIFKNPQVLAALNPHWAIQFFLTYKTVAFFSLGSVVLAITGVEALYADMGHFGKFPIQLAWFTVALPALLLNYFGQGALILSNPEAIANPFFMLAPEWLVFPMVILSTMATVIASQAVISGVFSLTRQAVRLGYLPGMNILHTSEVEAGQIYIPFVNWMLYIAVLIVVVTFRESTNLAAAYGIAVTGTMVITTILACTVAHYNWDWPRRVVKIILISLLLIDVPLFLANVVKFFAGGWLPVMLGAIMFMVMATWKWERFLLLRQLSRMSMPLESFVAMVEKETPQKVPGTAIYLSRTQQGIPHALLHNLNHNHVLHERIVLMTFRTQDVPYVDPDQHIEIKSLSPNVWRISATYGFHETPDVYEVFRRCAMKGMAFNLNTTSFFLSRETLLPSHRSILARLRAALFIWLSKNSLRTNDFIHVPADRVVEMGVQVEV.

Helical transmembrane passes span 9 to 29, 52 to 72, 101 to 121, 137 to 157, 169 to 189, 213 to 233, 247 to 267, 287 to 309, 337 to 357, 363 to 383, 396 to 416, and 419 to 439; these read LPAV…TSPL, FLSL…LAFV, VLLV…VITP, PALT…LFVI, FGPV…ISIF, VAFF…ALYA, WFTV…ALIL, FPMV…SGVF, IYIP…VVTF, LAAA…ILAC, VVKI…LANV, and FFAG…VMAT.

This sequence belongs to the HAK/KUP transporter (TC 2.A.72) family.

The protein localises to the cell inner membrane. The catalysed reaction is K(+)(in) + H(+)(in) = K(+)(out) + H(+)(out). In terms of biological role, transport of potassium into the cell. Likely operates as a K(+):H(+) symporter. In Tolumonas auensis (strain DSM 9187 / NBRC 110442 / TA 4), this protein is Probable potassium transport system protein Kup.